Consider the following 575-residue polypeptide: Acyloxyacyl hydrolase (575 aa).

Residues 1 to 25 (MKSPWRILVVSPLLLLPLHSSTSRA) form the signal peptide. Residues 26-34 (HDNQPGTIR) constitute a propeptide that is removed on maturation. One can recognise a Saposin B-type domain in the interval 36–117 (DHYTCVGCVL…HTLEFCKQEP (82 aa)). The interval 37 to 69 (HYTCVGCVLVVSVIEQLAQVHNSTVQASMERLC) is important for enzyme activity, localization to cytoplasmic vesicles, and protein stability. 8 disulfides stabilise this stretch: C40–C113, C43–C107, C69–C82, C122–C453, C159–C168, C205–C229, C248–C328, and C375–C459. N-linked (GlcNAc...) asparagine glycosylation occurs at N58. Positions 172–176 (KLAIK) are lipopolysaccharide binding. D183, D185, D187, Y189, D204, N206, D207, D209, V212, D222, D226, N228, N230, I232, and E244 together coordinate Ca(2+). A glycan (N-linked (GlcNAc...) asparagine) is linked at N206. The active site involves S262. A glycan (N-linked (GlcNAc...) asparagine) is linked at N466.

As to quaternary structure, heterodimer of the large and small subunits; disulfide-linked. The cofactor is Ca(2+). In terms of processing, cleaved into a large and a small subunit. Post-translationally, the small subunit is N-glycosylated.

It localises to the secreted. Its subcellular location is the cytoplasmic vesicle. It carries out the reaction a 3-(acyloxy)acyl derivative of bacterial toxin + H2O = a 3-hydroxyacyl derivative of bacterial toxin + a fatty acid + H(+). Removes the secondary (acyloxyacyl-linked) fatty acyl chains from the lipid A region of bacterial lipopolysaccharides (LPS). By breaking down LPS, terminates the host response to bacterial infection and prevents prolonged and damaging inflammatory responses. In peritoneal macrophages, seems to be important for recovery from a state of immune tolerance following infection by Gram-negative bacteria. This Oryctolagus cuniculus (Rabbit) protein is Acyloxyacyl hydrolase.